Here is a 139-residue protein sequence, read N- to C-terminus: Small ribosomal subunit protein uS9 (139 aa).

This sequence belongs to the universal ribosomal protein uS9 family.

This chain is Small ribosomal subunit protein uS9, found in Coxiella burnetii (strain CbuG_Q212) (Coxiella burnetii (strain Q212)).